Here is a 287-residue protein sequence, read N- to C-terminus: ATP synthase gamma chain (287 aa).

The protein belongs to the ATPase gamma chain family. As to quaternary structure, F-type ATPases have 2 components, CF(1) - the catalytic core - and CF(0) - the membrane proton channel. CF(1) has five subunits: alpha(3), beta(3), gamma(1), delta(1), epsilon(1). CF(0) has three main subunits: a, b and c. The F(1)F(0) complex interacts with SpoIIIJ and YqjG; YqgA is found in the same complex. Interacts with FloT.

Its subcellular location is the cell membrane. The protein resides in the membrane raft. Its function is as follows. Produces ATP from ADP in the presence of a proton gradient across the membrane. The gamma chain is believed to be important in regulating ATPase activity and the flow of protons through the CF(0) complex. This chain is ATP synthase gamma chain, found in Bacillus subtilis (strain 168).